We begin with the raw amino-acid sequence, 310 residues long: Lipoyl synthase (310 aa).

Residues Cys54, Cys59, Cys65, Cys80, Cys84, Cys87, and Ser295 each contribute to the [4Fe-4S] cluster site. The Radical SAM core domain maps to 66 to 284 (FASGTATFLI…LFGEDNLGFM (219 aa)).

The protein belongs to the radical SAM superfamily. Lipoyl synthase family. [4Fe-4S] cluster serves as cofactor.

The protein localises to the cytoplasm. The catalysed reaction is [[Fe-S] cluster scaffold protein carrying a second [4Fe-4S](2+) cluster] + N(6)-octanoyl-L-lysyl-[protein] + 2 oxidized [2Fe-2S]-[ferredoxin] + 2 S-adenosyl-L-methionine + 4 H(+) = [[Fe-S] cluster scaffold protein] + N(6)-[(R)-dihydrolipoyl]-L-lysyl-[protein] + 4 Fe(3+) + 2 hydrogen sulfide + 2 5'-deoxyadenosine + 2 L-methionine + 2 reduced [2Fe-2S]-[ferredoxin]. The protein operates within protein modification; protein lipoylation via endogenous pathway; protein N(6)-(lipoyl)lysine from octanoyl-[acyl-carrier-protein]: step 2/2. Catalyzes the radical-mediated insertion of two sulfur atoms into the C-6 and C-8 positions of the octanoyl moiety bound to the lipoyl domains of lipoate-dependent enzymes, thereby converting the octanoylated domains into lipoylated derivatives. The polypeptide is Lipoyl synthase (Prochlorococcus marinus (strain MIT 9215)).